A 198-amino-acid polypeptide reads, in one-letter code: MTLSKNENIKAKQKQINLPKILRQEIKENNKIIKWFYNIVMLLGGIGFLIVGISSYIGNNLIYFLDASEIIFFPQGITMCFYGTCGILFSINQISIILNGVGEGYNEFNKELNLMTIYRKGKQGKNSDINITYSLKDIEGIRIEIKNEYFNVKQNVFLRIKDKNDLPIIQLSNPIKISDLEKQASEIASFLNVPIKGY.

2 consecutive transmembrane segments (helical) span residues tryptophan 35–isoleucine 57 and isoleucine 70–asparagine 92.

The protein belongs to the Ycf4 family.

Its subcellular location is the plastid. It localises to the chloroplast thylakoid membrane. In terms of biological role, seems to be required for the assembly of the photosystem I complex. The sequence is that of Photosystem I assembly protein Ycf4 from Euglena gracilis.